Reading from the N-terminus, the 157-residue chain is Ribosome maturation factor RimP (157 aa).

It belongs to the RimP family.

It localises to the cytoplasm. In terms of biological role, required for maturation of 30S ribosomal subunits. In Thermus thermophilus (strain ATCC BAA-163 / DSM 7039 / HB27), this protein is Ribosome maturation factor RimP.